We begin with the raw amino-acid sequence, 121 residues long: ORF8 protein (121 aa).

The first 15 residues, 1–15 (MKFLVFLGIITTVAA), serve as a signal peptide directing secretion. The region spanning 19 to 121 (ECSLQSCTQH…HDVRVVLDFI (103 aa)) is the SARS ORF8 Ig-like domain. Disulfide bonds link Cys25-Cys90, Cys37-Cys102, and Cys61-Cys83. Residue Asn78 is glycosylated (N-linked (GlcNAc...) (complex) asparagine; by host).

As to quaternary structure, homodimer. Interacts with host IL17RA. Interacts with host IL17RC. Interacts with host MHC-I. In terms of processing, glycosylated by the host when secreted via the conventional pathway. The glycosylated form cannot bind IL17A and would not participate in the cytokine storm.

It is found in the secreted. Plays a role in modulating the host immune response. May act as a secreted virokine by mimicking interleukin-17A (IL17A), and thereby binding to the IL17RA receptor, leading to activation of the IL17 pathway and increased secretion of pro-inflammatory factors. Contributes to the cytokine storm during SARS-CoV-2 infection when secreted by unconventional pathway. May act by down-regulating major histocompability complex class I (MHC-I) at cell surface. May inhibit expression of some members of the IFN-stimulated gene (ISG) family including hosts IGF2BP1/ZBP1, MX1 and MX2, and DHX58. The protein is ORF8 protein of Severe acute respiratory syndrome coronavirus 2 (2019-nCoV).